Reading from the N-terminus, the 533-residue chain is Cytochrome P450 9e2 (533 aa).

Residue Cys-475 coordinates heme.

Belongs to the cytochrome P450 family. Requires heme as cofactor.

Its subcellular location is the endoplasmic reticulum membrane. The protein resides in the microsome membrane. The polypeptide is Cytochrome P450 9e2 (CYP9E2) (Blattella germanica (German cockroach)).